The primary structure comprises 409 residues: Outer membrane protein assembly factor BamB (409 aa).

A signal peptide spans M1 to G34. Residue C35 is the site of N-palmitoyl cysteine attachment. C35 carries S-diacylglycerol cysteine lipidation.

This sequence belongs to the BamB family. In terms of assembly, part of the Bam complex.

It is found in the cell outer membrane. In terms of biological role, part of the outer membrane protein assembly complex, which is involved in assembly and insertion of beta-barrel proteins into the outer membrane. The polypeptide is Outer membrane protein assembly factor BamB (Nitrosomonas eutropha (strain DSM 101675 / C91 / Nm57)).